Consider the following 151-residue polypeptide: MAERTFVAIKPDGVQRGLVGEILGRFERKGFKLVGLKQITPSRALAEEHYGVHKERPFFAGLVGFITSGPVVAMVWEGDGVIASARKLIGATKPLESEPGTIRGDLAVNIGRNVIHGSDAPETAEFEIGLWFQPSELNDWSPSDQAWRVED.

Positions 10, 58, 86, 92, 103, and 113 each coordinate ATP. The active-site Pros-phosphohistidine intermediate is the His-116.

Belongs to the NDK family. In terms of assembly, homotetramer. It depends on Mg(2+) as a cofactor.

Its subcellular location is the cytoplasm. The enzyme catalyses dZDP + ATP = dZTP + ADP. It catalyses the reaction a 2'-deoxyribonucleoside 5'-diphosphate + ATP = a 2'-deoxyribonucleoside 5'-triphosphate + ADP. The catalysed reaction is a ribonucleoside 5'-diphosphate + ATP = a ribonucleoside 5'-triphosphate + ADP. The protein operates within purine metabolism. Its function is as follows. Major role in the synthesis of nucleoside triphosphates other than ATP. The ATP gamma phosphate is transferred to the NDP beta phosphate via a ping-pong mechanism, using a phosphorylated active-site intermediate. (Microbial infection) Catalyzes the phosphorylation of dZDP to dZTP, when the bacterium is infected by a phage that produces the substrate for the synthesis of dZTP (2- amino-2'-deoxyadenosine 5'-triphosphate), which is then used by the phage as a DNA polymerase substrate. In Synechococcus sp. (strain CC9902), this protein is Nucleoside diphosphate kinase.